Reading from the N-terminus, the 129-residue chain is Lysozyme C (129 aa).

Positions 1–129 (KVFSKCELAH…LSEYLASCNL (129 aa)) constitute a C-type lysozyme domain. 4 cysteine pairs are disulfide-bonded: Cys-6-Cys-127, Cys-30-Cys-115, Cys-65-Cys-80, and Cys-76-Cys-94. Active-site residues include Glu-35 and Asp-53. Residues Lys-82, Asp-85, Asn-87, Asp-90, and Asp-91 each coordinate Ca(2+).

This sequence belongs to the glycosyl hydrolase 22 family. Monomer. Ca(2+) is required as a cofactor.

The catalysed reaction is Hydrolysis of (1-&gt;4)-beta-linkages between N-acetylmuramic acid and N-acetyl-D-glucosamine residues in a peptidoglycan and between N-acetyl-D-glucosamine residues in chitodextrins.. Lysozymes have primarily a bacteriolytic function; those in tissues and body fluids are associated with the monocyte-macrophage system and enhance the activity of immunoagents. This chain is Lysozyme C (LYZ), found in Equus asinus (Donkey).